Reading from the N-terminus, the 338-residue chain is GTPase Obg (338 aa).

An Obg domain is found at 1–159 (MQFIDEVKIH…RWLRLELKLM (159 aa)). Positions 66 to 91 (KAGRGKNGMGKDRHGANGDDLTIPVP) are disordered. One can recognise an OBG-type G domain in the interval 160 to 331 (ADVGLLGFPN…LLDEIARHLW (172 aa)). Residues 166 to 173 (GFPNVGKS), 191 to 195 (FTTIK), 213 to 216 (DIPG), 283 to 286 (NKID), and 312 to 314 (SAA) each bind GTP. Mg(2+) contacts are provided by Ser173 and Thr193.

It belongs to the TRAFAC class OBG-HflX-like GTPase superfamily. OBG GTPase family. In terms of assembly, monomer. Mg(2+) serves as cofactor.

It is found in the cytoplasm. An essential GTPase which binds GTP, GDP and possibly (p)ppGpp with moderate affinity, with high nucleotide exchange rates and a fairly low GTP hydrolysis rate. Plays a role in control of the cell cycle, stress response, ribosome biogenesis and in those bacteria that undergo differentiation, in morphogenesis control. This Geobacter metallireducens (strain ATCC 53774 / DSM 7210 / GS-15) protein is GTPase Obg.